We begin with the raw amino-acid sequence, 319 residues long: Carbonic anhydrase, chloroplastic (319 aa).

Residues 1–98 (MSTINGCLTS…AASKVAQITS (98 aa)) constitute a chloroplast transit peptide.

The protein belongs to the beta-class carbonic anhydrase family. As to quaternary structure, homohexamer.

It localises to the plastid. The protein resides in the chloroplast stroma. The catalysed reaction is hydrogencarbonate + H(+) = CO2 + H2O. In terms of biological role, reversible hydration of carbon dioxide. In Spinacia oleracea (Spinach), this protein is Carbonic anhydrase, chloroplastic.